Consider the following 1829-residue polypeptide: Protein let-418 (1829 aa).

Composition is skewed to acidic residues over residues Met1–Glu17 and Ala25–Asp39. Disordered regions lie at residues Met1–Thr81 and Met147–Glu198. Basic residues predominate over residues Arg48–Lys63. 2 PHD-type zinc fingers span residues Asn256–His303 and Asp317–Val365. Chromo domains follow at residues Leu401–Phe458 and Met489–Ile550. In terms of domain architecture, Helicase ATP-binding spans Arg614–Glu798. An ATP-binding site is contributed by Asp627–Thr634. Positions Asp749–His752 match the DEAH box motif. The 164-residue stretch at Leu930–Asp1093 folds into the Helicase C-terminal domain. Disordered regions lie at residues Ala1168–Pro1198, Ser1234–Leu1289, Ala1415–Ser1495, and Asn1745–Thr1829. The span at Gly1177–Thr1186 shows a compositional bias: acidic residues. Polar residues-rich tracts occupy residues Ser1234–Thr1247 and Gly1418–Thr1427. The span at Lys1429–Ala1444 shows a compositional bias: basic and acidic residues. Over residues Glu1446 to Pro1455 the composition is skewed to polar residues. Over residues Asp1474–Arg1490 the composition is skewed to basic and acidic residues. Over residues Met1749 to Asp1773 the composition is skewed to acidic residues. The segment covering Asp1792–Glu1811 has biased composition (low complexity). Residues Ala1819–Thr1829 are compositionally biased toward acidic residues.

As to quaternary structure, component of the MEC (MEP-1-containing complex) complex that contains let-418, mep-1 and hda-1. Component of a NURD complex that contains let-418, hda-1, lin-40 and lin-53. Interacts with lin-1. Interacts with pie-1. Interacts with akir-1. As to expression, expressed in embryos and larva.

It localises to the nucleus. Functionally, part of a NuRD (Nucleosome Remodeling and Deacetylase) complex which is implicated in the synMuv B pathway that negatively regulates specification of vulval cell fate. This negative regulation is thought to be mediated via interaction with the promoter of lin-39, a key regulator in vulva development, and is dependent on the presence lin-1. Contributes to negative regulation of lag-2 which is expressed in the gut during larval development. Has a broad role in development. In association with akir-1, plays a role in regulating the transcription of antimicrobial peptide genes in response to fungal infection. This chain is Protein let-418, found in Caenorhabditis elegans.